We begin with the raw amino-acid sequence, 112 residues long: MKKIEAIIKPFKLDEVKEALHEVGIKGITVTEAKGFGRQKGHTELYRGAEYVVDFLPKVKIEVVMEDSLVERAIEAIQQAAHTGRIGDGKIFVTPVEEVVRIRTGEKGGDAI.

The residue at position 51 (tyrosine 51) is an O-UMP-tyrosine.

It belongs to the P(II) protein family. Homotrimer.

In nitrogen-limiting conditions, when the ratio of Gln to 2-ketoglutarate decreases, P-II is uridylylated to P-II-UMP. P-II-UMP allows the deadenylation of glutamine synthetase (GS), thus activating the enzyme. Conversely, in nitrogen excess P-II is deuridylated and promotes the adenylation of GS. P-II indirectly controls the transcription of the GS gene (glnA). P-II prevents NR-II-catalyzed conversion of NR-I to NR-I-phosphate, the transcriptional activator of glnA. When P-II is uridylylated to P-II-UMP, these events are reversed. The chain is Nitrogen regulatory protein P-II (glnB) from Azospirillum brasilense.